We begin with the raw amino-acid sequence, 391 residues long: Ammonium transporter Amt1 (391 aa).

Helical transmembrane passes span 12 to 32 (VFFF…FIAL), 51 to 71 (LDLA…SYGF), 88 to 108 (AWWM…TGGV), 112 to 132 (IKIL…YPIV), 152 to 172 (AGSG…AYVL), 192 to 212 (IPIA…FNIG), 223 to 243 (LASV…GGAL), 261 to 281 (VAVC…VGLL), 305 to 325 (IGPV…IPFL), and 338 to 358 (GQII…LIIY).

The protein belongs to the ammonia transporter channel (TC 1.A.11.2) family. In terms of assembly, homotrimer. Interacts and forms a complex with GlnK1.

The protein localises to the cell membrane. Its activity is regulated as follows. Activity is regulated by the nitrogen regulatory protein GlnK1 via direct interaction. Formation of the GlnK1/Amt1 complex is decreased in the presence of Mg-ATP or 2-oxoglutarate. The presence of both effectors abolishes the formation of the complex. Its function is as follows. Involved in the uptake of ammonium/ammonia (NH(4)(+)/NH(3)). Transport is electrogenic. The chain is Ammonium transporter Amt1 from Methanocaldococcus jannaschii (strain ATCC 43067 / DSM 2661 / JAL-1 / JCM 10045 / NBRC 100440) (Methanococcus jannaschii).